We begin with the raw amino-acid sequence, 332 residues long: MQGSLMLDIGGTWLTAEDRQILRHPEVGGLIIFARNIEHPAQVRELCAAIRAIRPDLLLAVDQEGGRVQRLRQGFVRLPAMRAIADNPNAEELAEHCGWLMATEVQAVGLDLSFAPVLDLDHQRSAVVGSRAFEGDPERAALLAGAFIRGMHAAGMAATGKHFPGHGWAEADSHVAIPEDARSLEEIRRSDLVPFARLAGQLDALMPAHVIYPQVDPQPAGFSRRWLQEILRGELKFDGVIFSDDLSMAGAHVVGDAASRIEAALAAGCDMGLVCNDRASAELALAALQRLKVTPPSRLQRMRGKGYANTDYRQQPRWLEALSALRAAQLID.

Substrate is bound by residues D62, R70, R131, and 161–162 (KH). H174 acts as the Proton donor/acceptor in catalysis. D244 (nucleophile) is an active-site residue.

Belongs to the glycosyl hydrolase 3 family. NagZ subfamily.

It is found in the cytoplasm. It carries out the reaction Hydrolysis of terminal non-reducing N-acetyl-D-hexosamine residues in N-acetyl-beta-D-hexosaminides.. It participates in cell wall biogenesis; peptidoglycan recycling. Functionally, plays a role in peptidoglycan recycling by cleaving the terminal beta-1,4-linked N-acetylglucosamine (GlcNAc) from peptide-linked peptidoglycan fragments, giving rise to free GlcNAc, anhydro-N-acetylmuramic acid and anhydro-N-acetylmuramic acid-linked peptides. The chain is Beta-hexosaminidase from Pseudomonas aeruginosa (strain LESB58).